The following is a 708-amino-acid chain: Kelch-like protein 11 (708 aa).

Positions 1–15 (MAAAAVAAAAAAAAA) are cleaved as a signal peptide. Residues 47-70 (DFGPGPGISAMEASGGDPGPEAED) are disordered. Residues 94 to 170 (CDITLCFGGA…MYTGRIRVST (77 aa)) enclose the BTB domain. Positions 205–307 (CVAIHSLAHM…KPTYLTRHVK (103 aa)) constitute a BACK domain. Kelch repeat units follow at residues 360 to 407 (VIMV…VTES), 408 to 453 (YVYV…EVKG), 455 to 501 (LYSI…AIED), 503 to 556 (FVYI…VVNS), and 610 to 661 (DVFI…HVRI). Phosphoserine is present on serine 465.

In terms of assembly, component of a cullin-RING-based BCR (BTB-CUL3-RBX1) E3 ubiquitin-protein ligase complex. Homodimer. Interacts with CUL3.

Component of a cullin-RING-based BCR (BTB-CUL3-RBX1) E3 ubiquitin-protein ligase complex that mediates the ubiquitination of target proteins, leading most often to their proteasomal degradation. The chain is Kelch-like protein 11 (KLHL11) from Homo sapiens (Human).